A 216-amino-acid polypeptide reads, in one-letter code: MVKNLLLDIEGTVGSISFVKDKLFPYAASRYESYVNENYESDENLRELGKTPEEALINLRKLHAEGSKERSFKMVQGRIWKKGYESNELTSHLFPDVVPAIQRSLQLGMRVYIYSSGSVPAQKLYFEHSDAGNLLKYFSGYYDTTIGLKTECGSYVKIVGNSNPREWLFLSDNINELKAARKVGLHTGLVVRPGNDPVVDTSGFPVYNSFEILFTE.

Mg(2+) is bound by residues aspartate 8 and glutamate 10. Residues 115–116 (SS) and lysine 149 each bind substrate. Aspartate 172 contacts Mg(2+).

Belongs to the HAD-like hydrolase superfamily. MasA/MtnC family. In terms of assembly, monomer. The cofactor is Mg(2+).

The protein resides in the cytoplasm. It is found in the nucleus. It carries out the reaction 5-methylsulfanyl-2,3-dioxopentyl phosphate + H2O = 1,2-dihydroxy-5-(methylsulfanyl)pent-1-en-3-one + phosphate. Its pathway is amino-acid biosynthesis; L-methionine biosynthesis via salvage pathway; L-methionine from S-methyl-5-thio-alpha-D-ribose 1-phosphate: step 3/6. The protein operates within amino-acid biosynthesis; L-methionine biosynthesis via salvage pathway; L-methionine from S-methyl-5-thio-alpha-D-ribose 1-phosphate: step 4/6. Bifunctional enzyme that catalyzes the enolization of 2,3-diketo-5-methylthiopentyl-1-phosphate (DK-MTP-1-P) into the intermediate 2-hydroxy-3-keto-5-methylthiopentenyl-1-phosphate (HK-MTPenyl-1-P), which is then dephosphorylated to form the acireductone 1,2-dihydroxy-3-keto-5-methylthiopentene (DHK-MTPene). The sequence is that of Enolase-phosphatase E1 (utr4) from Schizosaccharomyces pombe (strain 972 / ATCC 24843) (Fission yeast).